The primary structure comprises 228 residues: Small ribosomal subunit protein uS10m (228 aa).

A mitochondrion-targeting transit peptide spans 1-17 (MKRYMFGTLPRVQPKRC).

This sequence belongs to the universal ribosomal protein uS10 family. Component of the mitochondrial small ribosomal subunit (mt-SSU). Mature yeast 74S mitochondrial ribosomes consist of a small (37S) and a large (54S) subunit. The 37S small subunit contains a 15S ribosomal RNA (15S mt-rRNA) and at least 32 different proteins. The 54S large subunit contains a 21S rRNA (21S mt-rRNA) and at least 45 different proteins.

The protein localises to the mitochondrion. Component of the mitochondrial ribosome (mitoribosome), a dedicated translation machinery responsible for the synthesis of mitochondrial genome-encoded proteins, including at least some of the essential transmembrane subunits of the mitochondrial respiratory chain. The mitoribosomes are attached to the mitochondrial inner membrane and translation products are cotranslationally integrated into the membrane. The sequence is that of Small ribosomal subunit protein uS10m (rsm10) from Schizosaccharomyces pombe (strain 972 / ATCC 24843) (Fission yeast).